Here is a 742-residue protein sequence, read N- to C-terminus: Hapless 2 (742 aa).

The signal sequence occupies residues 1–19 (MKFLAFGLIYFHFCILNRC). The Extracellular segment spans residues 20 to 540 (EYITSSTIQK…CYFSAGCIKE (521 aa)). Cystine bridges form between Cys30–Cys40, Cys118–Cys147, Cys129–Cys182, Cys148–Cys312, Cys150–Cys168, Cys295–Cys319, and Cys431–Cys470. The segment at 152 to 179 (LSDILGMGNDLSRGKVCYALNLGAGSAT) is important for membrane fusion. The chain crosses the membrane as a helical span at residues 541 to 561 (AFKSIASIAGVASALALVIFL). The Cytoplasmic segment spans residues 562-742 (AKNGYLVPII…STSPLYLLIE (181 aa)).

The protein belongs to the HAP2/GCS1 family.

The protein localises to the cell membrane. The protein resides in the cell junction. Functionally, during fertilization, required for the formation of intercellular membrane pores and subsequent exchange of gametic pronuclei between cells. Probably initiates the formation of intercellular membrane pores by inserting part of its extracellular domain into the cell membrane of the adjoining cell in the mating pair. Mating requires the presence of HAP2 on at least one of the two cells. Mating efficiency is high when HAP2 is present on both cells, and is strongly reduced when HAP2 is present on only one of the two cells. This chain is Hapless 2, found in Tetrahymena thermophila.